We begin with the raw amino-acid sequence, 511 residues long: Maturase K (511 aa).

This sequence belongs to the intron maturase 2 family. MatK subfamily.

Its subcellular location is the plastid. The protein resides in the chloroplast. In terms of biological role, usually encoded in the trnK tRNA gene intron. Probably assists in splicing its own and other chloroplast group II introns. This chain is Maturase K, found in Anchomanes difformis (Amorphophallus difformis).